A 401-amino-acid polypeptide reads, in one-letter code: S-adenosylmethionine synthase (401 aa).

His-16 contributes to the ATP binding site. Asp-18 lines the Mg(2+) pocket. Glu-44 is a binding site for K(+). Residues Glu-57 and Gln-100 each coordinate L-methionine. A flexible loop region spans residues 100-110; it reads QSPDIAQGVNE. Residues 174 to 176, 241 to 242, Asp-250, 256 to 257, Ala-273, and Lys-277 contribute to the ATP site; these read DAK, RF, and RK. Asp-250 is a binding site for L-methionine. An L-methionine-binding site is contributed by Lys-281.

The protein belongs to the AdoMet synthase family. As to quaternary structure, homotetramer; dimer of dimers. Mg(2+) is required as a cofactor. It depends on K(+) as a cofactor.

It localises to the cytoplasm. It catalyses the reaction L-methionine + ATP + H2O = S-adenosyl-L-methionine + phosphate + diphosphate. Its pathway is amino-acid biosynthesis; S-adenosyl-L-methionine biosynthesis; S-adenosyl-L-methionine from L-methionine: step 1/1. Functionally, catalyzes the formation of S-adenosylmethionine (AdoMet) from methionine and ATP. The overall synthetic reaction is composed of two sequential steps, AdoMet formation and the subsequent tripolyphosphate hydrolysis which occurs prior to release of AdoMet from the enzyme. In Streptococcus equi subsp. zooepidemicus (strain H70), this protein is S-adenosylmethionine synthase.